The sequence spans 276 residues: Digeranylgeranylglyceryl phosphate synthase (276 aa).

Helical transmembrane passes span 14–34 (VNTLAAGALTFIGAFVAGGAV), 90–110 (VVLFVGAAALAATLPVLAVCI), 144–164 (FVFGAAAVGSPLAGGVLAALA), 200–220 (ALAVSAVFVVGAAAASPVPYL), and 221–241 (VGVFGWWYLVAVCPGVVVMVV).

Belongs to the UbiA prenyltransferase family. DGGGP synthase subfamily. The cofactor is Mg(2+).

It is found in the cell membrane. It catalyses the reaction sn-3-O-(geranylgeranyl)glycerol 1-phosphate + (2E,6E,10E)-geranylgeranyl diphosphate = 2,3-bis-O-(geranylgeranyl)-sn-glycerol 1-phosphate + diphosphate. The protein operates within membrane lipid metabolism; glycerophospholipid metabolism. Prenyltransferase that catalyzes the transfer of the geranylgeranyl moiety of geranylgeranyl diphosphate (GGPP) to the C2 hydroxyl of (S)-3-O-geranylgeranylglyceryl phosphate (GGGP). This reaction is the second ether-bond-formation step in the biosynthesis of archaeal membrane lipids. The protein is Digeranylgeranylglyceryl phosphate synthase of Halobacterium salinarum (strain ATCC 29341 / DSM 671 / R1).